The primary structure comprises 150 residues: UPF0756 membrane protein HDEF_0364 (150 aa).

5 helical membrane passes run Met-1 to Ser-21, Ile-28 to Val-48, Tyr-51 to Gly-71, Ile-88 to Met-108, and Ile-123 to Leu-143.

Belongs to the UPF0756 family.

The protein resides in the cell membrane. The chain is UPF0756 membrane protein HDEF_0364 from Hamiltonella defensa subsp. Acyrthosiphon pisum (strain 5AT).